The sequence spans 400 residues: Phosphoglycerate kinase (400 aa).

Residues 23-25, Arg38, 61-64, Arg120, and Arg153 contribute to the substrate site; these read DLN and HFGR. ATP contacts are provided by residues Lys203, Glu325, and 355–358; that span reads GGDT.

Belongs to the phosphoglycerate kinase family. Monomer.

Its subcellular location is the cytoplasm. The enzyme catalyses (2R)-3-phosphoglycerate + ATP = (2R)-3-phospho-glyceroyl phosphate + ADP. It functions in the pathway carbohydrate degradation; glycolysis; pyruvate from D-glyceraldehyde 3-phosphate: step 2/5. The protein is Phosphoglycerate kinase of Methylobacterium radiotolerans (strain ATCC 27329 / DSM 1819 / JCM 2831 / NBRC 15690 / NCIMB 10815 / 0-1).